A 278-amino-acid polypeptide reads, in one-letter code: HTH-type transcriptional regulator HdfR (278 aa).

One can recognise an HTH lysR-type domain in the interval 1–58 (MDTELLKTFLEVSRTRHFGRAAEALYLTQSAVSFRIRQLENQLGVNLFTRHRNNIRLT). Positions 18–37 (FGRAAEALYLTQSAVSFRIR) form a DNA-binding region, H-T-H motif.

The protein belongs to the LysR transcriptional regulatory family.

Functionally, negatively regulates the transcription of the flagellar master operon flhDC by binding to the upstream region of the operon. The polypeptide is HTH-type transcriptional regulator HdfR (Salmonella agona (strain SL483)).